The chain runs to 332 residues: MKGYLKDFLKPRSVEIEPLSDNRAKVVLEPLERGFGHTLGNALRRLLLSSMPGTAVTEVEIEGVQHEYTAVEGIHEDTVDILLNLKDLAVRLNERDSVTLSVEKQGPGSVTAADIATDHDVEIQNPDLHIATITHEQPFKASLKIERGRGYLPVTAREEEDTRTIGHLALDASFSPVRRVSYAVESARVEQRTDLDKLVLDVETNGVVTPEEAVKFAASLLRDQLSVFVDLEGGLLEGGDEQEEPEIDPVLLRPIDDLELTVRSANCLKAESIHFVGDLVQRTEVELLKTPNLGKKSLNEIKDTLAEHGLSLGMQLDNWPPPSLGDRARIAG.

Residues 1–232 (MKGYLKDFLK…DQLSVFVDLE (232 aa)) are alpha N-terminal domain (alpha-NTD). Residues 247-332 (IDPVLLRPID…SLGDRARIAG (86 aa)) form an alpha C-terminal domain (alpha-CTD) region.

The protein belongs to the RNA polymerase alpha chain family. As to quaternary structure, homodimer. The RNAP catalytic core consists of 2 alpha, 1 beta, 1 beta' and 1 omega subunit. When a sigma factor is associated with the core the holoenzyme is formed, which can initiate transcription.

The catalysed reaction is RNA(n) + a ribonucleoside 5'-triphosphate = RNA(n+1) + diphosphate. In terms of biological role, DNA-dependent RNA polymerase catalyzes the transcription of DNA into RNA using the four ribonucleoside triphosphates as substrates. The protein is DNA-directed RNA polymerase subunit alpha of Halorhodospira halophila (strain DSM 244 / SL1) (Ectothiorhodospira halophila (strain DSM 244 / SL1)).